The following is a 99-amino-acid chain: MERLRIIRESRGSYVIQVYGEDHTLGTLLVEAIKRVSNPKLAYYEAVHPMEDIIQVYVKYEDDVDIKEVLRKASDYLLEVIGDFRRRYLEALERRGGGG.

This sequence belongs to the archaeal Rpo11/eukaryotic RPB11/RPC19 RNA polymerase subunit family. Part of the RNA polymerase complex.

The protein resides in the cytoplasm. It carries out the reaction RNA(n) + a ribonucleoside 5'-triphosphate = RNA(n+1) + diphosphate. In terms of biological role, DNA-dependent RNA polymerase (RNAP) catalyzes the transcription of DNA into RNA using the four ribonucleoside triphosphates as substrates. This chain is DNA-directed RNA polymerase subunit Rpo11, found in Aeropyrum pernix (strain ATCC 700893 / DSM 11879 / JCM 9820 / NBRC 100138 / K1).